Consider the following 569-residue polypeptide: 4-coumarate-CoA ligase 2 (569 aa).

Positions 1–24 are disordered; the sequence is MITIAESHPQIHHSPPDTTAPSTP. Residues 216-220, His265, 337-339, 359-360, Thr364, Asp448, Arg463, and Lys554 contribute to the ATP site; these read SSGTT, AAP, and QG. An SBD1 region spans residues 290 to 359; that stretch reads EMEGMLETIQ…GRLPQAVLGQ (70 aa). The tract at residues 360 to 427 is SBD2; that stretch reads GYGMTEAGPV…VRGPQIMKGY (68 aa).

Belongs to the ATP-dependent AMP-binding enzyme family. Mostly expressed in stems, and, to a lower extent, in bulbs.

It carries out the reaction (E)-4-coumarate + ATP + CoA = (E)-4-coumaroyl-CoA + AMP + diphosphate. Its pathway is phytoalexin biosynthesis; 3,4',5-trihydroxystilbene biosynthesis; 3,4',5-trihydroxystilbene from trans-4-coumarate: step 1/2. In terms of biological role, produces CoA thioesters of a variety of hydroxy- and methoxy-substituted cinnamic acids, which are used to synthesize several phenylpropanoid-derived compounds, including anthocyanins, flavonoids, isoflavonoids, coumarins, lignin, suberin and wall-bound phenolics. This is 4-coumarate-CoA ligase 2 from Narcissus pseudonarcissus (Daffodil).